The chain runs to 313 residues: CRISPR-associated endonuclease Cas1 1 (313 aa).

3 residues coordinate Mn(2+): glutamate 144, histidine 211, and aspartate 224. The tract at residues 288–313 is disordered; it reads PPLDAPEAVDPVIPPEEPSGDDGHRG.

Belongs to the CRISPR-associated endonuclease Cas1 family. In terms of assembly, homodimer, forms a heterotetramer with a Cas2 homodimer. Mg(2+) serves as cofactor. The cofactor is Mn(2+).

Its function is as follows. CRISPR (clustered regularly interspaced short palindromic repeat), is an adaptive immune system that provides protection against mobile genetic elements (viruses, transposable elements and conjugative plasmids). CRISPR clusters contain spacers, sequences complementary to antecedent mobile elements, and target invading nucleic acids. CRISPR clusters are transcribed and processed into CRISPR RNA (crRNA). Acts as a dsDNA endonuclease. Involved in the integration of spacer DNA into the CRISPR cassette. This Rhodospirillum rubrum (strain ATCC 11170 / ATH 1.1.1 / DSM 467 / LMG 4362 / NCIMB 8255 / S1) protein is CRISPR-associated endonuclease Cas1 1.